Consider the following 234-residue polypeptide: ATP synthase subunit a 2 (234 aa).

6 consecutive transmembrane segments (helical) span residues 29-49 (FFQH…VGLL), 90-110 (LIAT…IPGF), 116-136 (SLNT…IVGV), 147-167 (FMGP…IGHL), 186-206 (IVLM…MMLM), and 207-227 (GILV…IYIA).

Belongs to the ATPase A chain family. F-type ATPases have 2 components, CF(1) - the catalytic core - and CF(0) - the membrane proton channel. CF(1) has five subunits: alpha(3), beta(3), gamma(1), delta(1), epsilon(1). CF(0) has three main subunits: a(1), b(2) and c(9-12). The alpha and beta chains form an alternating ring which encloses part of the gamma chain. CF(1) is attached to CF(0) by a central stalk formed by the gamma and epsilon chains, while a peripheral stalk is formed by the delta and b chains.

It localises to the cell inner membrane. Its function is as follows. Key component of the proton channel; it plays a direct role in the translocation of protons across the membrane. In Syntrophotalea carbinolica (strain DSM 2380 / NBRC 103641 / GraBd1) (Pelobacter carbinolicus), this protein is ATP synthase subunit a 2.